The primary structure comprises 136 residues: Large ribosomal subunit protein uL16 (136 aa).

It belongs to the universal ribosomal protein uL16 family. As to quaternary structure, part of the 50S ribosomal subunit.

Functionally, binds 23S rRNA and is also seen to make contacts with the A and possibly P site tRNAs. The sequence is that of Large ribosomal subunit protein uL16 from Buchnera aphidicola subsp. Baizongia pistaciae (strain Bp).